We begin with the raw amino-acid sequence, 97 residues long: Co-chaperonin GroES (97 aa).

The protein belongs to the GroES chaperonin family. In terms of assembly, heptamer of 7 subunits arranged in a ring. Interacts with the chaperonin GroEL.

It localises to the cytoplasm. In terms of biological role, together with the chaperonin GroEL, plays an essential role in assisting protein folding. The GroEL-GroES system forms a nano-cage that allows encapsulation of the non-native substrate proteins and provides a physical environment optimized to promote and accelerate protein folding. GroES binds to the apical surface of the GroEL ring, thereby capping the opening of the GroEL channel. This is Co-chaperonin GroES from Pseudomonas aeruginosa (strain LESB58).